Consider the following 977-residue polypeptide: Macrophage colony-stimulating factor 1 receptor (977 aa).

The N-terminal stretch at 1–18 (MFFALLFLIGILLGQVQG) is a signal peptide. Topologically, residues 19-519 (WSEPRIRLSS…MEVSDQIFTS (501 aa)) are extracellular. 5 consecutive Ig-like C2-type domains span residues 22–109 (PRIR…VHVF), 120–198 (PSTS…EKVS), 213–305 (PYVY…TQLL), 316–407 (PKLS…ASIT), and 408–513 (FDIK…MEVS). Cys-48 and Cys-92 are joined by a disulfide. Asn-98, Asn-101, Asn-154, Asn-163, Asn-244, Asn-286, Asn-298, Asn-361, Asn-424, and Asn-455 each carry an N-linked (GlcNAc...) asparagine glycan. 2 disulfides stabilise this stretch: Cys-138–Cys-187 and Cys-234–Cys-289. Cysteines 430 and 495 form a disulfide. A helical transmembrane segment spans residues 520–540 (AMCGSTVAMVVLGLLLIFMIY). The Cytoplasmic portion of the chain corresponds to 541–977 (KYKQKPRYEI…LMKPNNYQFC (437 aa)). The interval 544–576 (QKPRYEIRWKIIEATNGNNYTFIDPTQLPYNEK) is regulatory juxtamembrane domain. Position 563 is a phosphotyrosine; by autocatalysis (Tyr-563). Positions 584-917 (LKLGKTLGAG…KISQMIQRML (334 aa)) constitute a Protein kinase domain. ATP is bound by residues 590-598 (LGAGAFGKV) and Lys-618. Phosphotyrosine; by autocatalysis is present on residues Tyr-701 and Tyr-725. The active-site Proton acceptor is the Asp-781. The activation loop stretch occupies residues 799–821 (DFGLARDIMNDSNYVVKGNARLP). Tyr-812 and Tyr-929 each carry phosphotyrosine; by autocatalysis. The interval 919 to 977 (ETSEQQDTQEYKNIPTEAEAEQQLESCDPVKHEDESFETSCDQEEEDQPLMKPNNYQFC) is disordered. Acidic residues predominate over residues 953 to 966 (ESFETSCDQEEEDQ). Tyr-974 is subject to Phosphotyrosine; by autocatalysis.

This sequence belongs to the protein kinase superfamily. Tyr protein kinase family. CSF-1/PDGF receptor subfamily. In terms of assembly, monomer. Homodimer. Interacts with CSF1. In terms of processing, autophosphorylated in response to CSF1 binding. autophosphorylation, leading to its degradation. Post-translationally, ubiquitinated. Becomes rapidly polyubiquitinated after autophosphorylation, leading to its degradation.

The protein resides in the cell membrane. The catalysed reaction is L-tyrosyl-[protein] + ATP = O-phospho-L-tyrosyl-[protein] + ADP + H(+). Its activity is regulated as follows. Present in an inactive conformation in the absence of bound ligand. CSF1 binding leads to dimerization and activation by autophosphorylation on tyrosine residues. Its function is as follows. Tyrosine-protein kinase that acts as a cell-surface receptor for CSF1 and plays an essential role in the regulation of survival, proliferation and differentiation of hematopoietic precursor cells, especially mononuclear phagocytes, such as macrophages and monocytes. Plays an important role in innate immunity and in inflammatory processes. Plays an important role in the regulation of osteoclast proliferation and differentiation, the regulation of bone resorption, and is required for normal bone development. Promotes reorganization of the actin cytoskeleton, regulates formation of membrane ruffles, cell adhesion and cell migration. Activates several signaling pathways in response to ligand binding. The sequence is that of Macrophage colony-stimulating factor 1 receptor (csf1r) from Danio rerio (Zebrafish).